The chain runs to 136 residues: Galectin-7 (136 aa).

The 131-residue stretch at 6–136 (HKSSLPEGIR…DVQLDSVRIF (131 aa)) folds into the Galectin domain. 70-76 (WGREERG) provides a ligand contact to a beta-D-galactoside.

Monomer. Mainly expressed in stratified squamous epithelium.

It localises to the cytoplasm. The protein resides in the nucleus. The protein localises to the secreted. Its function is as follows. Could be involved in cell-cell and/or cell-matrix interactions necessary for normal growth control. Pro-apoptotic protein that functions intracellularly upstream of JNK activation and cytochrome c release. The protein is Galectin-7 (LGALS7) of Homo sapiens (Human).